The primary structure comprises 175 residues: Protein UPS1, mitochondrial (175 aa).

The required for mitochondrial targeting stretch occupies residues 1–80 (MVLLHKSTHI…RGITETWIIE (80 aa)). The PRELI/MSF1 domain occupies 2-172 (VLLHKSTHIF…VIQKLEEARN (171 aa)). 4 residues coordinate a 1,2-diacyl-sn-glycero-3-phosphate: Y26, K58, K148, and N152.

The protein belongs to the slowmo family. As to quaternary structure, interacts with MDM35. Found associated with a 170 kDa complex.

It localises to the mitochondrion inner membrane. It is found in the mitochondrion intermembrane space. Functionally, required for maintenance of normal mitochondrial morphology. Required for PCP1-dependent processing of MGM1. The UPS1:MDM35 complex mediates the transfer of phosphatidic acid (PA) between liposomes and probably functions as a PA transporter across the mitochondrion intermembrane space. Phosphatidic acid release requires dissociation of the UPS1:MDM35 complex. Phosphatidic acid import is required for cardiolipin (CL) synthesis in the mitochondrial inner membrane. With UPS2, controls the level of cardiolipin in mitochondria. Cardiolipin is a unique phospholipid with four fatty acid chains and is present mainly in the mitochondrial inner membrane where it stabilizes the electron transport chain supercomplex between complexes III and IV through direct interaction of their subunits. The protein is Protein UPS1, mitochondrial (UPS1) of Saccharomyces cerevisiae (strain ATCC 204508 / S288c) (Baker's yeast).